We begin with the raw amino-acid sequence, 147 residues long: Large ribosomal subunit protein uL15 (147 aa).

Over residues 1-28 (MIRRRKKVRKLRGSHTHGWGCKKKHRGG) the composition is skewed to basic residues. The disordered stretch occupies residues 1-43 (MIRRRKKVRKLRGSHTHGWGCKKKHRGGGSKGGRGMAGTGKRN). The segment covering 29–38 (GSKGGRGMAG) has biased composition (gly residues).

It belongs to the universal ribosomal protein uL15 family. In terms of assembly, part of the 50S ribosomal subunit.

Its function is as follows. Binds to the 23S rRNA. The protein is Large ribosomal subunit protein uL15 of Pyrococcus furiosus (strain ATCC 43587 / DSM 3638 / JCM 8422 / Vc1).